Here is an 83-residue protein sequence, read N- to C-terminus: Small ribosomal subunit protein uS17 (83 aa).

Belongs to the universal ribosomal protein uS17 family. As to quaternary structure, part of the 30S ribosomal subunit.

One of the primary rRNA binding proteins, it binds specifically to the 5'-end of 16S ribosomal RNA. This is Small ribosomal subunit protein uS17 from Synechococcus sp. (strain RCC307).